The sequence spans 794 residues: Protein IQ-DOMAIN 32 (794 aa).

A disordered region spans residues 15–101; that stretch reads CSGGDDTSAD…QSFSVDEKKS (87 aa). 2 stretches are compositionally biased toward polar residues: residues 23-33 and 56-65; these read ADPNSTALENK and SVVSETTPAS. A phosphoserine mark is found at S78, S80, S142, S193, and S195. Positions 80-95 are enriched in polar residues; that stretch reads SPDNNNVSEKQQQSFS. IQ domains lie at 214-242 and 243-265; these read DESV…KVIK and LQAA…CVQA. Residues 230–241 are calmodulin-binding; sequence ARRELLRSKKVI. The interval 277 to 296 is disordered; sequence HSTKDGSRVSATSDKSEPNA. S369 bears the Phosphoserine mark. The interval 375–417 is disordered; the sequence is VNSDSTVENKTETDMPSYEASKVEGQNVELSETEKMSQYDSPE. Position 459 is a phosphoserine (S459). 2 disordered regions span residues 472–555 and 578–794; these read ELTS…RVEA and ATSM…KWQR. Residues 473 to 486 are compositionally biased toward polar residues; it reads LTSSTGSNKAMTLS. Residues 487–500 are compositionally biased toward basic and acidic residues; it reads SKDDVLGEEGKTDI. Phosphoserine occurs at positions 502 and 544. Composition is skewed to basic and acidic residues over residues 539 to 555 and 585 to 607; these read TLEK…RVEA and EDPK…HHEP. The segment covering 643–654 has biased composition (low complexity); the sequence is SQATPASQASSS. The Nuclear localization signal signature appears at 657–664; the sequence is ARKGKSEK. The span at 768-786 shows a compositional bias: polar residues; the sequence is NGKQVSPRIQRSASQAQQG.

It belongs to the IQD family. Binds to multiple calmodulin (CaM) in the presence of Ca(2+) and CaM-like proteins.

It localises to the nucleus. The protein resides in the cytoplasm. Its subcellular location is the cytoskeleton. Its function is as follows. May be involved in cooperative interactions with calmodulins or calmodulin-like proteins. Recruits calmodulin proteins to microtubules, thus being a potential scaffold in cellular signaling and trafficking. May associate with nucleic acids and regulate gene expression at the transcriptional or post-transcriptional level. This Arabidopsis thaliana (Mouse-ear cress) protein is Protein IQ-DOMAIN 32.